The following is a 452-amino-acid chain: UDP-glycosyltransferase 76E4 (452 aa).

UDP-alpha-D-glucose-binding positions include threonine 274, 333–335 (APQ), 350–358 (HCGWNSTLE), and 372–375 (QGEQ).

This sequence belongs to the UDP-glycosyltransferase family.

The chain is UDP-glycosyltransferase 76E4 (UGT76E4) from Arabidopsis thaliana (Mouse-ear cress).